A 907-amino-acid polypeptide reads, in one-letter code: MQILKIPWFGHKTENKTVECYAVTINKDGTRLASGGLDGNVKIWDLTTINVFYKMADQPHKSKKDSTSTKLEESLPDKSLRRPLCSMSRHNGVVTSLKFSPDGRWLASGSDDKICLIWEKDNTQIAKSFGTDEHDLEHWTVRKRLVAHDNDIQDICWSPDGNLLVTVGLDRSVIIWNALTFEKIKRYDIHQSMVKGIVFDPANKFFATASDDRTVRIFRYYKKLNEYNNYEFQMEHVVVDPFKKSPLTSYFRRMSWSPDGQHIAVPNATNGPVPSVAIINRGNWGSDISLIGHEAPVEVCSFSPTLFQIADTPANEEIKFQTVVATGGQDRTLAIWSTCNSRPIVVCSDIVDSSITDICWSPDGETLYFSCLDGSITGVKFGARELGQPVKEDLIDQQLNRYGADRESTILPESVEQLQLEEQSKDSRAISIRRMMPIQEAKPEQTPPISTPASAAIDIERLRKQTVTMTKSGKKRVAPLLVSTSAAPKNVLQKPLEKKRRTKSSSKISQAAYLLPKMGVQTTVHGIKKKAESMSNDTEVEENNDNDDIGENVMANTNSVSDAALKRQRNRRKRKLMELKYPSSFKYISNLPEGLFNNHTLQNIEINKIYKAHSKHKDISAEISSSTAVEIDEDLVFSVVFRVFDHMRKENEVLGQTSGRIRTTIEVRNGKPWDDDISDRDFDDATKVIVTEEGNDKREYCLFFPFRVQHVLPIILNDVLKYYVLCSFHGSVQIISADTGSYRCPTFELGESVVTMRHSQGYMLVLTSSGLFYSWDLKAMKVTMTGISIAAILNNYEIGGKIVVSPIVRGLEINPQDGSPLVLLDMTNDIYGYSIDLQCWVKTVDSWYYGVGADKDLDVVLTGLVKKSKMSYEEDKVTEKIFTYKFDSSNDLEDAMRKRGQELLDLI.

WD repeat units follow at residues 15–54 (NKTVECYAVTINKDGTRLASGGLDGNVKIWDLTTINVFYK), 89–128 (RHNGVVTSLKFSPDGRWLASGSDDKICLIWEKDNTQIAKS), 147–186 (AHDNDIQDICWSPDGNLLVTVGLDRSVIIWNALTFEKIKR), 189–228 (IHQSMVKGIVFDPANKFFATASDDRTVRIFRYYKKLNEYN), 292–346 (GHEA…PIVV), and 350–391 (IVDS…QPVK). The interval 532–552 (ESMSNDTEVEENNDNDDIGEN) is disordered. Acidic residues predominate over residues 538–550 (TEVEENNDNDDIG).

Belongs to the WD repeat HIR1 family.

Its subcellular location is the nucleus. Its function is as follows. Required for replication-independent chromatin assembly and for the periodic repression of histone gene transcription during the cell cycle. The chain is Protein HIR1 (HIR1) from Candida albicans (strain SC5314 / ATCC MYA-2876) (Yeast).